Consider the following 142-residue polypeptide: Protein Turandot X (142 aa).

A signal peptide spans 1–22 (MGLSIGSLLICVFLGIVPFATA).

It belongs to the Turandot family.

It localises to the secreted. Functionally, a humoral factor that may play a role in stress tolerance. The sequence is that of Protein Turandot X from Drosophila melanogaster (Fruit fly).